Consider the following 415-residue polypeptide: MADTLKPEAPNPDTDAYAHESELDAHLQTKRMVINMGPSHPATHGTVRLKVELEGETIVKIDPEIGFLHRGFQKSCENVTWTQCLPYTDRLNYLSAMMNNFGFLNAVEKLIGLEIPERAQYIRVIGSELHRLTDHLTCVGATGLEMGGFAPFLLAMEFRELLHDRTAELTGARLTTSFGRVGGSNRDLPEGWIPRVHKTLDQGLALLDEMEGLLTNNRIFVDRTKGTGVISAEDAIEYGYTGPALRACGVDYDIRKTKPYWVYDRFDFDIPVGEHGDNYDRYLVRLEEMRQSIRILRQAMDTIPAGPIIVDDWRIALPPKPEVYGTIEGVMSHFKLVMEGIQVPAGEVYDATEASNGELGWYLVSDGRGRPYKVHVRAPGFPVLAAVPHIIEGKMLADLIPTFDTINMIGGEVEQ.

Belongs to the complex I 49 kDa subunit family. As to quaternary structure, NDH-1 is composed of 14 different subunits. Subunits NuoB, C, D, E, F, and G constitute the peripheral sector of the complex.

It is found in the cell inner membrane. It catalyses the reaction a quinone + NADH + 5 H(+)(in) = a quinol + NAD(+) + 4 H(+)(out). In terms of biological role, NDH-1 shuttles electrons from NADH, via FMN and iron-sulfur (Fe-S) centers, to quinones in the respiratory chain. The immediate electron acceptor for the enzyme in this species is believed to be ubiquinone. Couples the redox reaction to proton translocation (for every two electrons transferred, four hydrogen ions are translocated across the cytoplasmic membrane), and thus conserves the redox energy in a proton gradient. The sequence is that of NADH-quinone oxidoreductase subunit D from Myxococcus xanthus (strain DK1622).